A 209-amino-acid polypeptide reads, in one-letter code: FAS-associated death domain protein (209 aa).

Residues 3-81 (PFLVLLHSVS…RKDLLLRLDD (79 aa)) form the DED domain. The Death domain occupies 97–181 (LRAAMEIICD…VVADLIEEDQ (85 aa)). The segment covering 187–200 (QSGSANPGSFTAWD) has biased composition (polar residues). Residues 187–209 (QSGSANPGSFTAWDSGSAAPGAS) form a disordered region.

Can self-associate. Component of the AIM2 PANoptosome complex, a multiprotein complex that drives inflammatory cell death (PANoptosis). Component of the death-induced signaling complex (DISC) composed of cell surface receptor FAS/CD95 or TNFRSF1A, adapter protein FADD and the CASP8 protease; recruitment of CASP8 to the complex is required for processing of CASP8 into the p18 and p10 subunits. Interacts (via death domain) with FAS (via death domain). Interacts directly (via DED domain) with NOL3 (via CARD domain); inhibits death-inducing signaling complex (DISC) assembly by inhibiting the increase in FAS-FADD binding induced by FAS activation. Interacts with CFLAR, PEA15 and MBD4. When phosphorylated, part of a complex containing HIPK3 and FAS. May interact with MAVS/IPS1. Interacts with MOCV v-CFLAR protein and PIDD1. Interacts with RIPK1 and TRADD. Interacts with stimulated TNFRSF10B. Interacts with DDX24. Phosphorylated.

It is found in the cytoplasm. Its function is as follows. Apoptotic adapter molecule that recruits caspases CASP8 or CASP10 to the activated FAS/CD95 or TNFRSF1A/TNFR-1 receptors. The resulting aggregate called the death-inducing signaling complex (DISC) performs CASP8 proteolytic activation. Active CASP8 initiates the subsequent cascade of caspases mediating apoptosis. Involved in interferon-mediated antiviral immune response, playing a role in the positive regulation of interferon signaling. In Bos taurus (Bovine), this protein is FAS-associated death domain protein.